A 479-amino-acid chain; its full sequence is UDP-glucose flavonoid 3-O-glucosyltransferase 6 (479 aa).

Histidine 17 acts as the Proton acceptor in catalysis. Position 17 (histidine 17) interacts with an anthocyanidin. Aspartate 121 serves as the catalytic Charge relay. UDP-alpha-D-glucose-binding residues include threonine 143, alanine 354, glutamine 356, histidine 371, tryptophan 374, asparagine 375, serine 376, and glutamate 379. An an anthocyanidin-binding site is contributed by alanine 394. UDP-alpha-D-glucose is bound by residues glutamate 395 and glutamine 396. Positions 454-479 (MSRKALEEDGSSYSSLGRFLDQIQTS) are disordered.

It belongs to the UDP-glycosyltransferase family. Strongly expressed in achenes, with lower expression levels detected in receptacles.

It catalyses the reaction a flavonol + UDP-alpha-D-glucose = a flavonol 3-O-beta-D-glucoside + UDP + H(+). Its function is as follows. Broad spectrum multifunctional glucosyltransferase. Catalyzes the formation of flavonol 3-O-glucosides during fruit ripening. Accepted substrates include several flavonoids, hydroxycoumarins and beta-naphthols. Uses UDP-Glc as a sugar donor, but not UDP-Gal or UDP-GlcUA. May also be involved in detoxification of xenobiotics. This chain is UDP-glucose flavonoid 3-O-glucosyltransferase 6, found in Fragaria ananassa (Strawberry).